A 157-amino-acid polypeptide reads, in one-letter code: 3-dehydroquinate dehydratase (157 aa).

Tyrosine 29 acts as the Proton acceptor in catalysis. 3 residues coordinate substrate: asparagine 80, histidine 86, and aspartate 93. Residue histidine 107 is the Proton donor of the active site. Substrate is bound by residues 108–109 (IS) and arginine 118.

The protein belongs to the type-II 3-dehydroquinase family. As to quaternary structure, homododecamer.

The catalysed reaction is 3-dehydroquinate = 3-dehydroshikimate + H2O. The protein operates within metabolic intermediate biosynthesis; chorismate biosynthesis; chorismate from D-erythrose 4-phosphate and phosphoenolpyruvate: step 3/7. Functionally, catalyzes a trans-dehydration via an enolate intermediate. This is 3-dehydroquinate dehydratase (aroQ) from Streptomyces coelicolor (strain ATCC BAA-471 / A3(2) / M145).